A 2390-amino-acid polypeptide reads, in one-letter code: Spectrin beta chain, non-erythrocytic 2 (2390 aa).

An N-acetylserine modification is found at S2. The tract at residues 2-278 (SSTLSPTDFD…IITYVATYYH (277 aa)) is actin-binding. A phosphoserine mark is found at S6 and S31. Calponin-homology (CH) domains are found at residues 57–161 (AVQK…LRFQ) and 176–281 (KSAK…HYFS). 6 Spectrin repeats span residues 306–414 (LVEK…LALR), 427–527 (AARF…RERL), 532–639 (ELQK…RLEE), 642–744 (RLWR…QRLA), 749–849 (LYQF…RALE), and 855–954 (YTML…KAAL). Phosphoserine is present on S959. Spectrin repeat units follow at residues 960–1063 (IQNY…SLGE), 1066–1169 (RLQD…GRLA), 1174–1262 (FQGF…RHKK), 1279–1379 (EQQH…ARSL), 1384–1485 (RAEL…RRLQ), 1489–1586 (EQHQ…RLED), 1589–1692 (RAQQ…RLQE), 1696–1797 (LCQL…GQVL), 1801–1904 (YELQ…QLLL), 1910–2010 (FRFF…DWLQ), and 2017–2076 (VFGR…EKLT). S1073 carries the post-translational modification Phosphoserine. The span at 2081–2096 (REKERKRKREEEERRK) shows a compositional bias: basic and acidic residues. Disordered stretches follow at residues 2081–2222 (REKE…EQME) and 2331–2390 (SSAS…KKNK). Over residues 2116–2125 (QTASDTTWDG) the composition is skewed to polar residues. Residues S2171 and S2199 each carry the phosphoserine modification. The region spanning 2218-2328 (QEQMEGMLCR…WLRVVNAAIA (111 aa)) is the PH domain. Position 2354 is a phosphothreonine (T2354). S2359 bears the Phosphoserine mark. The segment covering 2370 to 2383 (RSKDGREREREKRF) has biased composition (basic and acidic residues).

This sequence belongs to the spectrin family. In terms of tissue distribution, highly expressed in brain, kidney, pancreas, and liver, and at lower levels in lung and placenta.

The protein localises to the cytoplasm. It is found in the cytoskeleton. Its subcellular location is the cell cortex. Functionally, probably plays an important role in neuronal membrane skeleton. The chain is Spectrin beta chain, non-erythrocytic 2 (SPTBN2) from Homo sapiens (Human).